Reading from the N-terminus, the 438-residue chain is uncharacterized protein (438 aa).

The signal sequence occupies residues 1–19 (MKKLLLAASIICLASAGLA).

This is an uncharacterized protein from Rickettsia conorii (strain ATCC VR-613 / Malish 7).